Here is a 623-residue protein sequence, read N- to C-terminus: Kelch repeat and BTB domain-containing protein 11 (623 aa).

A disordered region spans residues 1 to 129 (MEHAVAPCVL…PEEPGEPAPV (129 aa)). Over residues 12–31 (PGTEPGAAGESESEGAASPA) the composition is skewed to low complexity. Over residues 42–55 (CFSSGEESPPQSLA) the composition is skewed to polar residues. Residues serine 64, serine 67, serine 87, and serine 107 each carry the phosphoserine modification. Residues 79 to 91 (EAGSAGAASPEEL) show a composition bias toward low complexity. A BTB domain is found at 140-196 (PDLVLEVSGRRLRAHKAVLAARSDYFRARASRDVLRVQGVSLTALRLLLADAYSGRM). Kelch repeat units follow at residues 311-359 (RPQS…VLYN), 360-412 (YLFV…ALDG), 413-455 (HLYA…ATTC), and 458-500 (EIYV…ALDG).

This Homo sapiens (Human) protein is Kelch repeat and BTB domain-containing protein 11 (KBTBD11).